The chain runs to 147 residues: 3-hydroxyacyl-[acyl-carrier-protein] dehydratase FabZ (147 aa).

Histidine 49 is an active-site residue.

It belongs to the thioester dehydratase family. FabZ subfamily.

It is found in the cytoplasm. The enzyme catalyses a (3R)-hydroxyacyl-[ACP] = a (2E)-enoyl-[ACP] + H2O. Involved in unsaturated fatty acids biosynthesis. Catalyzes the dehydration of short chain beta-hydroxyacyl-ACPs and long chain saturated and unsaturated beta-hydroxyacyl-ACPs. This Syntrophotalea carbinolica (strain DSM 2380 / NBRC 103641 / GraBd1) (Pelobacter carbinolicus) protein is 3-hydroxyacyl-[acyl-carrier-protein] dehydratase FabZ.